We begin with the raw amino-acid sequence, 616 residues long: DNA mismatch repair protein MutL (616 aa).

The protein belongs to the DNA mismatch repair MutL/HexB family.

Functionally, this protein is involved in the repair of mismatches in DNA. It is required for dam-dependent methyl-directed DNA mismatch repair. May act as a 'molecular matchmaker', a protein that promotes the formation of a stable complex between two or more DNA-binding proteins in an ATP-dependent manner without itself being part of a final effector complex. The sequence is that of DNA mismatch repair protein MutL from Syntrophus aciditrophicus (strain SB).